A 464-amino-acid polypeptide reads, in one-letter code: Glutamate decarboxylase (464 aa).

K274 bears the N6-(pyridoxal phosphate)lysine mark.

This sequence belongs to the group II decarboxylase family. It depends on pyridoxal 5'-phosphate as a cofactor.

The enzyme catalyses L-glutamate + H(+) = 4-aminobutanoate + CO2. Its function is as follows. Catalyzes the pyridoxal-dependent decarboxylation of glutamate to produce 4-aminobutanoate. Has weak activity with aspartate, but cannot complement an E.coli panD deletion mutant. This chain is Glutamate decarboxylase, found in Aliivibrio fischeri (strain ATCC 700601 / ES114) (Vibrio fischeri).